Consider the following 154-residue polypeptide: Urease accessory protein UreE (154 aa).

It belongs to the UreE family.

Its subcellular location is the cytoplasm. Involved in urease metallocenter assembly. Binds nickel. Probably functions as a nickel donor during metallocenter assembly. The sequence is that of Urease accessory protein UreE from Rhizobium meliloti (strain 1021) (Ensifer meliloti).